Reading from the N-terminus, the 343-residue chain is Small ribosomal subunit biogenesis GTPase RsgA (343 aa).

In terms of domain architecture, CP-type G spans 116–275; sequence RGQLKPVAAN…LIDSPGIREF (160 aa). GTP contacts are provided by residues 163 to 166 and 217 to 225; these read NKAD and GQSGVGKSS. Zn(2+) contacts are provided by C299, C304, H306, and C312.

It belongs to the TRAFAC class YlqF/YawG GTPase family. RsgA subfamily. As to quaternary structure, monomer. Associates with 30S ribosomal subunit, binds 16S rRNA. Requires Zn(2+) as cofactor.

It is found in the cytoplasm. Functionally, one of several proteins that assist in the late maturation steps of the functional core of the 30S ribosomal subunit. Helps release RbfA from mature subunits. May play a role in the assembly of ribosomal proteins into the subunit. Circularly permuted GTPase that catalyzes slow GTP hydrolysis, GTPase activity is stimulated by the 30S ribosomal subunit. The protein is Small ribosomal subunit biogenesis GTPase RsgA of Pseudomonas savastanoi pv. phaseolicola (strain 1448A / Race 6) (Pseudomonas syringae pv. phaseolicola (strain 1448A / Race 6)).